The sequence spans 197 residues: MSETQNSTSQKAMDEDNKAASQTMPNTQDKNYEDELTQVALALVEDVINYAVKIVEEERNPLKNIKWMTHGEFTVEKGLKQIDEYFSKCVSKKCWAHGVEFVERKDLIHSFLYIYYVHWSISTADLPVARISAGTYFTMKVSKTKPPDAPIVVSYVGDHQALVHRPGMVRFRENWQKNLTDAKYSFMESFPFLFNRV.

2 stretches are compositionally biased toward polar residues: residues 1–11 (MSETQNSTSQK) and 19–29 (AASQTMPNTQD). Positions 1 to 29 (MSETQNSTSQKAMDEDNKAASQTMPNTQD) are disordered. The segment at 35–52 (ELTQVALALVEDVINYAV) is RII-binding.

In terms of assembly, binds to type II regulatory subunits (RII). As to expression, present in cilia (at protein level). Expressed in tissues containing axoneme-based organelles (cilia and/or flagella): trachea and testis. Highly expressed in airway cilia.

The protein resides in the cytoplasm. In terms of biological role, binds to type II regulatory subunits of protein kinase A and anchors/targets them. This chain is A-kinase anchor protein 14 (AKAP14), found in Homo sapiens (Human).